The primary structure comprises 72 residues: UPF0154 protein LBA1278 (72 aa).

A helical transmembrane segment spans residues 3 to 23 (LGLAIFLIIIALLVGATAGFY).

This sequence belongs to the UPF0154 family.

It is found in the cell membrane. The chain is UPF0154 protein LBA1278 from Lactobacillus acidophilus (strain ATCC 700396 / NCK56 / N2 / NCFM).